The primary structure comprises 93 residues: uncharacterized protein (93 aa).

Residues 20 to 40 (VYIYLCFSLMTIALICYLIHI) form a helical membrane-spanning segment. Residue N78 is glycosylated (N-linked (GlcNAc...) asparagine; by host).

Belongs to the asfivirus KP93L family.

Its subcellular location is the host membrane. This is an uncharacterized protein from Ornithodoros (relapsing fever ticks).